A 470-amino-acid polypeptide reads, in one-letter code: ATP synthase subunit beta (470 aa).

157–164 lines the ATP pocket; that stretch reads GGAGVGKT.

This sequence belongs to the ATPase alpha/beta chains family. As to quaternary structure, F-type ATPases have 2 components, CF(1) - the catalytic core - and CF(0) - the membrane proton channel. CF(1) has five subunits: alpha(3), beta(3), gamma(1), delta(1), epsilon(1). CF(0) has three main subunits: a(1), b(2) and c(9-12). The alpha and beta chains form an alternating ring which encloses part of the gamma chain. CF(1) is attached to CF(0) by a central stalk formed by the gamma and epsilon chains, while a peripheral stalk is formed by the delta and b chains.

It localises to the cell inner membrane. The enzyme catalyses ATP + H2O + 4 H(+)(in) = ADP + phosphate + 5 H(+)(out). In terms of biological role, produces ATP from ADP in the presence of a proton gradient across the membrane. The catalytic sites are hosted primarily by the beta subunits. The chain is ATP synthase subunit beta from Citrifermentans bemidjiense (strain ATCC BAA-1014 / DSM 16622 / JCM 12645 / Bem) (Geobacter bemidjiensis).